Reading from the N-terminus, the 440-residue chain is Ankyrin repeat and MYND domain-containing protein 2 (440 aa).

ANK repeat units follow at residues 45–74 (NGMTPLMHAAYKGKLEMCKLLLRHGADASC), 79–108 (HGYTALMFAALSGNKDITWVMLEAGAETDV), and 159–188 (KLAGPLHKIITTTNLHPVKIVMLVSENPLL). Residues cysteine 320, cysteine 323, cysteine 332, cysteine 335, cysteine 341, cysteine 345, histidine 353, and cysteine 357 each coordinate Zn(2+). Residues 320–357 (CTTCGEKGASKRCSVCKMVIYCDQTCQKTHWFAHKKMC) form an MYND-type zinc finger. The span at 371 to 381 (AAKHKRQEEKN) shows a compositional bias: basic and acidic residues. A disordered region spans residues 371-440 (AAKHKRQEEK…APTGPQLSEE (70 aa)).

In terms of assembly, interacts with the retinal-specific guanylyl cyclase GC1.

The protein localises to the cell projection. It localises to the cilium. May be involved in the trafficking of signaling proteins to the cilia. This chain is Ankyrin repeat and MYND domain-containing protein 2 (Ankmy2), found in Mus musculus (Mouse).